The following is a 308-amino-acid chain: Very-long-chain enoyl-CoA reductase (308 aa).

The Cytoplasmic portion of the chain corresponds to 1-86 (MKHYEVEILD…YFRDLGAQIS (86 aa)). An N6-acetyllysine modification is found at lysine 22. Position 58 is a phosphoserine (serine 58). Lysine 60 bears the N6-acetyllysine mark. Residues 87–106 (WVTVFLTEYAGPLFIYLLFY) form a helical membrane-spanning segment. At 107 to 124 (FRVPFIYGRKYDFTSSRH) the chain is on the lumenal side. A helical transmembrane segment spans residues 125-147 (TVVHLACICHSFHYIKRLLETLF). At 148-158 (VHRFSHGTMPL) the chain is on the cytoplasmic side. A helical transmembrane segment spans residues 159–180 (RNIFKNCTYYWGFAAWMAYYIN). The Lumenal segment spans residues 181 to 189 (HPLYTPPTY). A helical membrane pass occupies residues 190–216 (GAQQVKLALAIFVICQLGNFSIHMALR). Topologically, residues 217 to 245 (DLRPAGSKTRKIPYPTRNPFTWLFLLVSC) are cytoplasmic. Residues 246-262 (PNYTYEVGSWIGFAIMT) traverse the membrane as a helical segment. The Lumenal portion of the chain corresponds to 263-264 (QC). Residues 265–292 (LPVALFSLVGFTQMTIWAKGKHRSYLKE) traverse the membrane as a helical segment. Over 293–308 (FRDYPPLRMPIIPFLL) the chain is Cytoplasmic.

The protein belongs to the steroid 5-alpha reductase family. In terms of assembly, interacts with ELOVL1 and LASS2. Glycosylated.

Its subcellular location is the endoplasmic reticulum membrane. It carries out the reaction a very-long-chain 2,3-saturated fatty acyl-CoA + NADP(+) = a very-long-chain (2E)-enoyl-CoA + NADPH + H(+). The enzyme catalyses octadecanoyl-CoA + NADP(+) = (2E)-octadecenoyl-CoA + NADPH + H(+). The catalysed reaction is (2E,7Z,10Z,13Z,16Z)-docosapentaenoyl-CoA + NADPH + H(+) = (7Z,10Z,13Z,16Z)-docosatetraenoyl-CoA + NADP(+). It catalyses the reaction (2E,7Z,10Z,13Z,16Z,19Z)-docosahexaenoyl-CoA + NADPH + H(+) = (7Z,10Z,13Z,16Z,19Z)-docosapentaenoyl-CoA + NADP(+). It carries out the reaction (2E,8Z,11Z,14Z)-eicosatetraenoyl-CoA + NADPH + H(+) = (8Z,11Z,14Z)-eicosatrienoyl-CoA + NADP(+). The enzyme catalyses (2E)-hexadecenoyl-CoA + NADPH + H(+) = hexadecanoyl-CoA + NADP(+). The protein operates within lipid metabolism; fatty acid biosynthesis. It functions in the pathway lipid metabolism; sphingolipid metabolism. In terms of biological role, involved in both the production of very long-chain fatty acids for sphingolipid synthesis and the degradation of the sphingosine moiety in sphingolipids through the sphingosine 1-phosphate metabolic pathway. Catalyzes the last of the four reactions of the long-chain fatty acids elongation cycle. This endoplasmic reticulum-bound enzymatic process, allows the addition of 2 carbons to the chain of long- and very long-chain fatty acids/VLCFAs per cycle. This enzyme reduces the trans-2,3-enoyl-CoA fatty acid intermediate to an acyl-CoA that can be further elongated by entering a new cycle of elongation. Thereby, it participates in the production of VLCFAs of different chain lengths that are involved in multiple biological processes as precursors of membrane lipids and lipid mediators. Catalyzes the saturation step of the sphingosine 1-phosphate metabolic pathway, the conversion of trans-2-hexadecenoyl-CoA to palmitoyl-CoA. The sequence is that of Very-long-chain enoyl-CoA reductase (TECR) from Bos taurus (Bovine).